A 633-amino-acid chain; its full sequence is DNA mismatch repair protein MutL (633 aa).

Disordered regions lie at residues 337–364 (RPDDQLAPPGATSLTEPRPTGAAAGEFG) and 383–405 (VGWSGGSSASGGSSGYSAYTRPE). The segment covering 385–396 (WSGGSSASGGSS) has biased composition (gly residues).

Belongs to the DNA mismatch repair MutL/HexB family.

This protein is involved in the repair of mismatches in DNA. It is required for dam-dependent methyl-directed DNA mismatch repair. May act as a 'molecular matchmaker', a protein that promotes the formation of a stable complex between two or more DNA-binding proteins in an ATP-dependent manner without itself being part of a final effector complex. In Pseudomonas aeruginosa (strain LESB58), this protein is DNA mismatch repair protein MutL.